Consider the following 541-residue polypeptide: ATP synthase subunit alpha (541 aa).

173 to 180 serves as a coordination point for ATP; it reads GDRQTGKT. Positions 517 to 527 are enriched in basic and acidic residues; the sequence is GIEPGVEEHES. Residues 517 to 541 form a disordered region; that stretch reads GIEPGVEEHESLGATAVNQETIVKK. Over residues 532–541 the composition is skewed to polar residues; it reads AVNQETIVKK.

The protein belongs to the ATPase alpha/beta chains family. F-type ATPases have 2 components, CF(1) - the catalytic core - and CF(0) - the membrane proton channel. CF(1) has five subunits: alpha(3), beta(3), gamma(1), delta(1), epsilon(1). CF(0) has three main subunits: a(1), b(2) and c(9-12). The alpha and beta chains form an alternating ring which encloses part of the gamma chain. CF(1) is attached to CF(0) by a central stalk formed by the gamma and epsilon chains, while a peripheral stalk is formed by the delta and b chains.

It localises to the cell membrane. The enzyme catalyses ATP + H2O + 4 H(+)(in) = ADP + phosphate + 5 H(+)(out). Functionally, produces ATP from ADP in the presence of a proton gradient across the membrane. The alpha chain is a regulatory subunit. In Kocuria rhizophila (strain ATCC 9341 / DSM 348 / NBRC 103217 / DC2201), this protein is ATP synthase subunit alpha.